We begin with the raw amino-acid sequence, 642 residues long: Influenza virus NS1A-binding protein homolog (642 aa).

A BTB domain is found at 32–99 (CDVRLQVCGH…AYTAQLKADK (68 aa)). In terms of domain architecture, BACK spans 134 to 233 (CISYRNFASC…YYSADHKLLD (100 aa)). A phosphoserine mark is found at Ser246, Ser277, Ser322, Ser336, and Ser338. A disordered region spans residues 257–281 (KPPRENGHKQISGSSTGCLSSPNAS). Residues 265-281 (KQISGSSTGCLSSPNAS) show a composition bias toward polar residues. Kelch repeat units lie at residues 369–415 (KLIA…VLMG), 416–463 (QLYV…ALNG), 465–512 (LYIV…ELGG), 513–559 (YLYI…VLDG), 561–606 (LFVG…TVGN), and 608–642 (IYAV…IFQF).

This sequence belongs to the BTB-kelch protein family. Homodimer; through the BTB domain. Interacts with AHR/Aryl hydrocarbon receptor. Interacts (via BACK domain) with pre-mRNA-binding protein HNRNPK; the interaction is direct. Interacts (via BACK domain) with splicing factor PTBP1; the interaction is direct. Interacts (via Kelch repeats) with RNA polymerase POLR2A (via C-terminal domain). Interacts (via BACK domain) with splicing factor SNRPA; the interaction is indirect. Interacts (via Kelch repeats) with splicing factor SART1. Interacts (via BACK domain) with ALYREF; the interaction is indirect and likely plays a role in mRNA nuclear export. Interacts (via Kelch repeats) with KLHL20 (via Kelch repeats); this interaction blocks the assembly of Cul3-KLHL20 complex. In terms of tissue distribution, ubiquitous expression. In the heart, the highest expression is detected in the ventricles and the lowest in the atria. Expressed in dendrites and spines in neurons.

The protein resides in the cytoplasm. Its subcellular location is the cytoskeleton. It localises to the nucleus. Functionally, involved in many cell functions, including pre-mRNA splicing, the aryl hydrocarbon receptor (AHR) pathway, F-actin organization and protein ubiquitination. Plays a role in the dynamic organization of the actin skeleton as a stabilizer of actin filaments by association with F-actin through Kelch repeats. Protects cells from cell death induced by actin destabilization. Functions as a modifier of the AHR/Aryl hydrocarbon receptor pathway increasing the concentration of AHR available to activate transcription. In addition, functions as a negative regulator of BCR(KLHL20) E3 ubiquitin ligase complex to prevent ubiquitin-mediated proteolysis of PML and DAPK1, two tumor suppressors. Inhibits pre-mRNA splicing (in vitro). May play a role in mRNA nuclear export. May play a role in cell cycle progression in the nucleus. This Mus musculus (Mouse) protein is Influenza virus NS1A-binding protein homolog.